Consider the following 383-residue polypeptide: ATP phosphoribosyltransferase regulatory subunit (383 aa).

It belongs to the class-II aminoacyl-tRNA synthetase family. HisZ subfamily. As to quaternary structure, heteromultimer composed of HisG and HisZ subunits.

The protein localises to the cytoplasm. The protein operates within amino-acid biosynthesis; L-histidine biosynthesis; L-histidine from 5-phospho-alpha-D-ribose 1-diphosphate: step 1/9. Required for the first step of histidine biosynthesis. May allow the feedback regulation of ATP phosphoribosyltransferase activity by histidine. The sequence is that of ATP phosphoribosyltransferase regulatory subunit from Neisseria gonorrhoeae (strain NCCP11945).